We begin with the raw amino-acid sequence, 269 residues long: Uncharacterised methyltransferase MT1546 (269 aa).

This sequence belongs to the methyltransferase superfamily.

This chain is Uncharacterised methyltransferase MT1546, found in Mycobacterium tuberculosis (strain CDC 1551 / Oshkosh).